The chain runs to 790 residues: Endonuclease MutS2 (790 aa).

334–341 (GPNTGGKT) provides a ligand contact to ATP. Positions 715 to 790 (IDVRGQNLEE…GMGVTIVHLK (76 aa)) constitute a Smr domain.

Belongs to the DNA mismatch repair MutS family. MutS2 subfamily. In terms of assembly, homodimer. Binds to stalled ribosomes, contacting rRNA.

Functionally, endonuclease that is involved in the suppression of homologous recombination and thus may have a key role in the control of bacterial genetic diversity. Acts as a ribosome collision sensor, splitting the ribosome into its 2 subunits. Detects stalled/collided 70S ribosomes which it binds and splits by an ATP-hydrolysis driven conformational change. Acts upstream of the ribosome quality control system (RQC), a ribosome-associated complex that mediates the extraction of incompletely synthesized nascent chains from stalled ribosomes and their subsequent degradation. Probably generates substrates for RQC. The sequence is that of Endonuclease MutS2 from Alkaliphilus oremlandii (strain OhILAs) (Clostridium oremlandii (strain OhILAs)).